We begin with the raw amino-acid sequence, 302 residues long: tRNA-cytidine(32) 2-sulfurtransferase (302 aa).

The PP-loop motif motif lies at 43-48 (SGGKDS). Residues Cys-118, Cys-121, and Cys-209 each coordinate [4Fe-4S] cluster.

This sequence belongs to the TtcA family. Homodimer. Mg(2+) is required as a cofactor. It depends on [4Fe-4S] cluster as a cofactor.

The protein resides in the cytoplasm. It carries out the reaction cytidine(32) in tRNA + S-sulfanyl-L-cysteinyl-[cysteine desulfurase] + AH2 + ATP = 2-thiocytidine(32) in tRNA + L-cysteinyl-[cysteine desulfurase] + A + AMP + diphosphate + H(+). The protein operates within tRNA modification. In terms of biological role, catalyzes the ATP-dependent 2-thiolation of cytidine in position 32 of tRNA, to form 2-thiocytidine (s(2)C32). The sulfur atoms are provided by the cysteine/cysteine desulfurase (IscS) system. In Polynucleobacter necessarius subsp. necessarius (strain STIR1), this protein is tRNA-cytidine(32) 2-sulfurtransferase.